A 954-amino-acid polypeptide reads, in one-letter code: Glycine dehydrogenase (decarboxylating) (954 aa).

At Lys704 the chain carries N6-(pyridoxal phosphate)lysine.

Belongs to the GcvP family. As to quaternary structure, the glycine cleavage system is composed of four proteins: P, T, L and H. It depends on pyridoxal 5'-phosphate as a cofactor.

It catalyses the reaction N(6)-[(R)-lipoyl]-L-lysyl-[glycine-cleavage complex H protein] + glycine + H(+) = N(6)-[(R)-S(8)-aminomethyldihydrolipoyl]-L-lysyl-[glycine-cleavage complex H protein] + CO2. The glycine cleavage system catalyzes the degradation of glycine. The P protein binds the alpha-amino group of glycine through its pyridoxal phosphate cofactor; CO(2) is released and the remaining methylamine moiety is then transferred to the lipoamide cofactor of the H protein. In Rhizobium leguminosarum bv. trifolii (strain WSM2304), this protein is Glycine dehydrogenase (decarboxylating).